We begin with the raw amino-acid sequence, 1261 residues long: MKKRGFYNLKHPFDPCPFEFFCSGTWKPVEYMRIEDGMMTIRLLENGYVLEDIRPFQRLRLRSRKAALSDCICFLRPDIDVCVLYRIHEDDLEPVWVDARIVSIERKPHESECSCKINVRIYIDQGCIGSEKQRINRDSVVIGLNQISILQKFYKEQSTDQFYRWRFSEDCTSLMKTRLSLGKFLPDLSWLTVTSTLKSIVFQIRTVQTKMVYQIVTDEEGSSSTLSSMNITLEDGVSLSKVVKFNPADILDDSQDLEIKQETDYYQEEDEVVELRRSKRRNVRPDIYTGCDYEPDTIDGWVRMMPYQFGKCAVNVESDEDEDDNNEDGDTNDDLYIPLSRLFIKKKKTNSREAKPKSRKGEIVVIDKRRVHGFGRKERKSELSVIPFTPVFEPIPLEQFGLNANSFGGGGSFSRSQYFDETEKYRSKGMKYGKKMTEMEEMMEADLCWKGPNQVKSFQKRTSRSSRSVAPKTEDSDEPRVYKKVTLSAGAYNKLIDTYMNNIESTIAAKDEPTSVVDQWEELKKTNFAFKLHGDMEKNLSEDGEGETSENEMLWREMELCLASSYILDDNEVRVDNEAFEKARSGCEHDYRLEEEIGMCCRLCGHVGSEIKDVSAPFAEHKKWTIETKHIEEDDIKTKLSHKEAQTKDFSMISDSSEMLAAEESDNVWALIPKLKRKLHVHQRRAFEFLWRNVAGSVEPSLMDPTSGNIGGCVISHSPGAGKTFLIIAFLTSYLKLFPGKRPLVLAPKTTLYTWYKEFIKWEIPVPVHLIHGRRTYCTFKQNKTVQFNGVPKPSRDVMHVLDCLEKIQKWHAHPSVLVMGYTSFTTLMREDSKFAHRKYMAKVLRESPGLLVLDEGHNPRSTKSRLRKALMKVGTDLRILLSGTLFQNNFCEYFNTLCLARPKFIHEVLMELDQKFKTNHGVNKAPHLLENRARKLFLDIIAKKIDASVGDERLQGLNMLKNMTNGFIDNYEGSGSGSGDALPGLQIYTLVMNSTDIQHKILTKLQDVIKTYFGYPLEVELQITLAAIHPWLVTSSNCCTKFFNPQELSEIGKLKHDAKKGSKVMFVLNLIFRVVKREKILIFCHNIAPIRMFTELFENIFRWQRGREILTLTGDLELFERGRVIDKFEEPGNPSRVLLASITACAEGISLTAASRVIMLDSEWNPSKTKQAIARAFRPGQQKVVYVYQLLSRGTLEEDKYRRTTWKEWVSCMIFSEEFVADPSLWQAEKIEDDILREIVGEDKVKSFHMIMKNEKASTG.

Residues Phe458–Pro479 are disordered. Positions Asp704–Lys904 constitute a Helicase ATP-binding domain. His717–Thr724 is an ATP binding site. Positions Asp855–His858 match the DEAH box motif. The Helicase C-terminal domain occupies Phe1067–Ile1232.

It belongs to the helicase family. Interacts with NRPD1 and SHH1.

Its subcellular location is the nucleus. Its function is as follows. Probable chromatin remodeling factor. The sequence is that of SNF2 domain-containing protein CLASSY 2 (CLSY2) from Arabidopsis thaliana (Mouse-ear cress).